The primary structure comprises 115 residues: MCMQMSSANASAFALRTNNILYYIILLDSGANAEVSQSDMAICYHVTCTAPNSHLSVGGTCGGGSALVYKRAAVARFLLSSRCSLRMARPIPDIFPVRNATLGDERAEFLPSSNK.

This is an uncharacterized protein from Gallus gallus (Chicken).